The primary structure comprises 801 residues: Cadherin-20 (801 aa).

The signal sequence occupies residues 1-34 (MWTSGRMSNAKNWLGLGMSLYFWGLMDLTTTVLS). Residues 35 to 59 (DTPTPQGELEALLSDKPQSHQRTKR) constitute a propeptide that is removed on maturation. Residues 60-619 (SWVWNQFFVL…AYMLPVSLSR (560 aa)) lie on the Extracellular side of the membrane. 5 consecutive Cadherin domains span residues 61 to 165 (WVWN…EPKF), 166 to 274 (LDGP…PPRF), 275 to 389 (PQKH…PPVF), 390 to 494 (EPGF…APEF), and 494 to 610 (FPRF…SPEA). Residue asparagine 261 is glycosylated (N-linked (GlcNAc...) asparagine). Asparagine 420, asparagine 461, and asparagine 542 each carry an N-linked (GlcNAc...) asparagine glycan. Residues 620–640 (GALIAILACIFVLLVLVLLIL) form a helical membrane-spanning segment. Residues 641-801 (SMRRHRKQPY…GASEGPAPLW (161 aa)) are Cytoplasmic-facing.

Expressed in placenta, adult brain, and fetal brain.

It is found in the cell membrane. Functionally, cadherins are calcium-dependent cell adhesion proteins. They preferentially interact with themselves in a homophilic manner in connecting cells; cadherins may thus contribute to the sorting of heterogeneous cell types. This is Cadherin-20 (CDH20) from Homo sapiens (Human).